The primary structure comprises 664 residues: Intraflagellar transport protein 70B (664 aa).

TPR repeat units follow at residues 11–44 (DGEF…SPRS), 45–78 (RAGL…HPEL), 153–186 (YDGQ…SGYQ), 188–220 (DISY…GIRQ), 385–418 (LTEQ…YDET), 423–456 (IPVL…CNDH), and 458–491 (VWKL…NYDN). Residues 507–534 (YIMTSQNEEAEELMRKIEKEEEQLSYDD) are a coiled coil. Residues 543 to 576 (CIVNLVIGTLYCAKGNYDFGISRVIKSLEPYHKK) form a TPR 8 repeat.

Belongs to the TTC30/dfy-1/fleer family. Interacts with the IFT B complex components IFT27, IFT46, IFT74, IFT52, IFT57, IFT80, IFT81 and IFT88. Interacts with KIF17.

Its subcellular location is the cell projection. It is found in the cilium. Its function is as follows. Required for polyglutamylation of axonemal tubulin. Plays a role in anterograde intraflagellar transport (IFT), the process by which cilia precursors are transported from the base of the cilium to the site of their incorporation at the tip. This chain is Intraflagellar transport protein 70B (Ift70b), found in Rattus norvegicus (Rat).